Here is a 435-residue protein sequence, read N- to C-terminus: Serine protease snk (435 aa).

Positions 1-27 (MIILWSLIVHLQLTCLHLILQTPNLEA) are cleaved as a signal peptide. Residues 92 to 138 (FCRRSFDGRSGYCILAYQCLHVIREYRVHGTRIDICTHRNNVPVICC) form the Clip domain. 7 disulfides stabilise this stretch: Cys93–Cys137, Cys104–Cys127, Cys110–Cys138, Cys179–Cys303, Cys220–Cys236, Cys346–Cys366, and Cys377–Cys408. Residues 186–432 (IVGGTPTRHG…YLDWIEKIAF (247 aa)) form the Peptidase S1 domain. Catalysis depends on His235, which acts as the Charge relay system. Asn255 carries an N-linked (GlcNAc...) asparagine glycan. The active-site Charge relay system is the Asp283. Ser381 functions as the Charge relay system in the catalytic mechanism.

This sequence belongs to the peptidase S1 family. CLIP subfamily. In terms of assembly, interacts (via N-terminal prodomain) with ea/easter (via Peptidase domain); leads to proteolytic activation of ea by snk. This interaction does not require sulfation of a vitelline membrane component by pip but proteolytic cleavage of ea by snk does. Proteolytically activated by gd. May also be cleaved by another protease.

Its subcellular location is the secreted. In terms of biological role, component of the extracellular signaling pathway that establishes the dorsal-ventral pathway of the embryo. A protease cascade involving ndl, gd, snk and ea results in activation of the spz Toll receptor ligand; acts downstream of ndl and gd. Activation of ea requires both activation of the ndl-gd-snk protease cascade and sulfation of a vitelline membrane component by pip. Localized activation of the Toll receptor in the ventral region of the embryo defines cell identities along the dorsal-ventral continuum. The sequence is that of Serine protease snk from Drosophila melanogaster (Fruit fly).